The following is a 439-amino-acid chain: MSNVVIIADDLTGANATGVLLARKGYKTATFLQLPQDPLENGNRFDVISITTDSRAVAPEEAYRRVAEAARAMLGNKPGLFTKRIDSTLRGNLGPEIDAMLDVLGPDSLAVVVAAFPTSGRITVGGYLLVHSIPLEQTDVARDPKTPVHQTLVADIVAAQSKHSVGFIPLATVLQGSTAVMEALGAQKEAGKRIVVMDAATQKDLDTIAHGAYLSGLSVVAVDPGPFTEALAAYVLPKPKQGRGKKVLMVVGSVTALTRQQLKAVENAYSTCFTTVDVHALIDPWRNAEEIERVSGEVLDHLDDHQVLGVRTVEEAGQVLDLASVALAYMISEEEIASRIADGLAAIARRVLQVSHGEVGGLYTSGGDVTVAVCQALAASGVEVKDEVVPLAAYGRLIGGAFHQTPIITKGGLVGNSDAACTCVDYLLTKISNETYPAE.

Residues serine 253, 366 to 369 (GGDV), and glycine 412 each bind ATP.

This sequence belongs to the four-carbon acid sugar kinase family.

The enzyme catalyses D-erythronate + ATP = 4-phospho-D-erythronate + ADP + H(+). In terms of biological role, catalyzes the ATP-dependent phosphorylation of D-erythronate to D-erythronate 4-phosphate. Can also phosphorylate D-threonate and 4-hydroxy-L-threonine, with lower efficiency. This chain is D-erythronate kinase, found in Heliobacterium modesticaldum (strain ATCC 51547 / Ice1).